We begin with the raw amino-acid sequence, 159 residues long: Elicitor-responsive protein 1 (159 aa).

Residues 1–112 (MAGSGVLEVH…SLGMEHGTWE (112 aa)) form the C2 domain. Ca(2+) is bound by residues aspartate 21 and aspartate 30. Serine 44 bears the Phosphoserine; by CPK mark. Positions 81, 83, 86, and 89 each coordinate Ca(2+).

It depends on Ca(2+) as a cofactor. In terms of processing, phosphorylated at Ser-44 by CPK18 in a calcium-dependent manner. As to expression, isoform 2 is expressed in young vascular tissues and tiller buds.

The protein resides in the cytoplasm. It localises to the cell membrane. May play a role in plant defense signaling. Isoform 2 binds to phospholipids in a Ca(2+)-dependent manner in response to pathogen elicitors. This is Elicitor-responsive protein 1 (ERG1) from Oryza sativa subsp. japonica (Rice).